We begin with the raw amino-acid sequence, 674 residues long: CLK4-associating serine/arginine rich protein (674 aa).

Position 101 is a phosphoserine (serine 101). 2 disordered regions span residues 171-232 (TVAE…GMAD) and 258-674 (EKAM…HYRH). Over residues 182–214 (PEEEESAAEEESNSDEDEVIPDIDVEVDVDELN) the composition is skewed to acidic residues. Basic residues predominate over residues 265–283 (RRSRRQRREFREKRLRGRK). A phosphoserine mark is found at serine 285 and serine 294. The segment covering 290–313 (ARRDSPTYDPYKRSPSESSSESRS) has biased composition (basic and acidic residues). Residue threonine 327 is modified to Phosphothreonine. Serine 331 and serine 335 each carry phosphoserine. The segment covering 356-365 (PPAPPQPGGP) has biased composition (pro residues). The span at 378 to 399 (SSSSSSSSASRTSSSRSSSRSS) shows a compositional bias: low complexity. Basic residues-rich tracts occupy residues 411–443 (SGRH…RRHS) and 481–492 (RGGRGLRHHSSS). 2 stretches are compositionally biased toward low complexity: residues 493–506 (RSRS…SRSR) and 514–532 (HSPS…SQSP). Phosphoserine is present on serine 547. Phosphothreonine is present on threonine 573. Positions 585-647 (ALNRQFKADK…ERQYSRQSRS (63 aa)) form a coiled coil. Composition is skewed to basic and acidic residues over residues 590–617 (FKAD…ELRA) and 625–641 (KERE…ERQY). Over residues 642-651 (SRQSRSPSPR) the composition is skewed to low complexity. The span at 659 to 674 (SRRRSRSRSRSPHYRH) shows a compositional bias: basic residues.

The protein belongs to the splicing factor SR family. In terms of assembly, probably interacts with CLK4. In terms of processing, phosphorylated in vitro by CLK4.

It is found in the nucleus. Functionally, probably functions as an alternative splicing regulator. May regulate the mRNA splicing of genes such as CLK1. May act by regulating members of the CLK kinase family. This Homo sapiens (Human) protein is CLK4-associating serine/arginine rich protein (CLASRP).